Reading from the N-terminus, the 654-residue chain is Probable replication restart protein PriA (654 aa).

Cysteine 367, cysteine 370, cysteine 376, cysteine 379, cysteine 395, cysteine 398, cysteine 407, and cysteine 410 together coordinate Zn(2+).

The protein belongs to the helicase family. PriA subfamily. As to quaternary structure, component of the replication restart primosome. Zn(2+) is required as a cofactor.

In terms of biological role, initiates the restart of stalled replication forks, which reloads the replicative helicase on sites other than the origin of replication. Recognizes and binds to abandoned replication forks and remodels them to uncover a helicase loading site. Promotes assembly of the primosome at these replication forks. This is Probable replication restart protein PriA from Mycobacterium tuberculosis (strain CDC 1551 / Oshkosh).